The sequence spans 178 residues: ATP-dependent protease subunit HslV (178 aa).

The active site involves Thr-7. 3 residues coordinate Na(+): Gly-162, Cys-165, and Thr-168.

The protein belongs to the peptidase T1B family. HslV subfamily. In terms of assembly, a double ring-shaped homohexamer of HslV is capped on each side by a ring-shaped HslU homohexamer. The assembly of the HslU/HslV complex is dependent on binding of ATP.

It localises to the cytoplasm. It catalyses the reaction ATP-dependent cleavage of peptide bonds with broad specificity.. Allosterically activated by HslU binding. Functionally, protease subunit of a proteasome-like degradation complex believed to be a general protein degrading machinery. This Burkholderia orbicola (strain AU 1054) protein is ATP-dependent protease subunit HslV.